The following is a 347-amino-acid chain: MAPQAYDRDKALELALAQVEKSFGKGAVMRLGEEARQPISVIPTGSIALDVALGIGGLPRGRIVEIYGPESSGKTTVALHAVANAQAAGGVAAFIDAEHALDPDYARKLGVDTDALLVSQPDTGEQALEIADMLVRSGAIDIIVIDSVAALVPRAEIEGEMGDSHVGLQARLMSQALRKMTSALNNSGTTAIFINQLREKIGVMFGSPETTTGGKALKFYASVRLDVRRIETLKDGSDAVGNRTRVKVVKNKVSPPFKQAEFDILYGQGISKEGSLIDMGVEQGFIRKSGSWYTYEGDQLGQGKENARKFLLENTDVRDEIEKKIKEKLGIGADLTAEDAAEVPADF.

68-75 (GPESSGKT) contacts ATP.

This sequence belongs to the RecA family.

It is found in the cytoplasm. Its function is as follows. Can catalyze the hydrolysis of ATP in the presence of single-stranded DNA, the ATP-dependent uptake of single-stranded DNA by duplex DNA, and the ATP-dependent hybridization of homologous single-stranded DNAs. It interacts with LexA causing its activation and leading to its autocatalytic cleavage. This Nocardia farcinica (strain IFM 10152) protein is Protein RecA.